A 504-amino-acid polypeptide reads, in one-letter code: Probable cytosol aminopeptidase (504 aa).

Positions 268 and 273 each coordinate Mn(2+). Lysine 280 is an active-site residue. Mn(2+) contacts are provided by aspartate 291, aspartate 350, and glutamate 352. Residue arginine 354 is part of the active site.

The protein belongs to the peptidase M17 family. Mn(2+) serves as cofactor.

The protein localises to the cytoplasm. It carries out the reaction Release of an N-terminal amino acid, Xaa-|-Yaa-, in which Xaa is preferably Leu, but may be other amino acids including Pro although not Arg or Lys, and Yaa may be Pro. Amino acid amides and methyl esters are also readily hydrolyzed, but rates on arylamides are exceedingly low.. The enzyme catalyses Release of an N-terminal amino acid, preferentially leucine, but not glutamic or aspartic acids.. Functionally, presumably involved in the processing and regular turnover of intracellular proteins. Catalyzes the removal of unsubstituted N-terminal amino acids from various peptides. This Psychromonas ingrahamii (strain DSM 17664 / CCUG 51855 / 37) protein is Probable cytosol aminopeptidase.